Reading from the N-terminus, the 350-residue chain is Deoxyhypusine synthase-like protein (350 aa).

This sequence belongs to the deoxyhypusine synthase family.

This chain is Deoxyhypusine synthase-like protein, found in Chlorobaculum tepidum (strain ATCC 49652 / DSM 12025 / NBRC 103806 / TLS) (Chlorobium tepidum).